The following is a 1166-amino-acid chain: Zinc finger CCHC domain-containing protein 2 (1166 aa).

Disordered regions lie at residues 1–85, 205–240, 550–668, and 904–982; these read MLRM…GGHA, RAEGSRGSVEDEPSGDGEQDAEKDGPGPEGSGCAKL, SSAD…ARFS, and PASF…ISAV. Residues 43–64 show a composition bias toward pro residues; sequence PPPPPTGLPRGPPPPPSPPRGL. Residues 65-76 are compositionally biased toward low complexity; it reads EPPVASGPTAGA. Positions 214–223 are enriched in acidic residues; it reads EDEPSGDGEQ. The span at 572-587 shows a compositional bias: basic and acidic residues; sequence PQVEKEKVKKTEDRLN. A compositionally biased stretch (low complexity) spans 624-633; the sequence is SSESYSSPSS. Basic and acidic residues predominate over residues 634–653; the sequence is PRHDGRESLESEEEKDRDSD. A compositionally biased stretch (polar residues) spans 919-947; sequence LPTQNSSALNAATSAQPASTGISPSQSTV. Pro residues predominate over residues 949–963; the sequence is PAVPTHTPGPAPSPS. Residues 964–982 are compositionally biased toward polar residues; the sequence is PALTHSTAQSDSTSYISAV. The CCHC-type zinc finger occupies 1119–1136; the sequence is VSCYNCGVSGHYAQDCKQ.

This Mus musculus (Mouse) protein is Zinc finger CCHC domain-containing protein 2 (Zcchc2).